Reading from the N-terminus, the 315-residue chain is Calumenin (315 aa).

The signal sequence occupies residues 1–19; the sequence is MNKRPLLLCLGLWVACTLS. 6 consecutive EF-hand domains span residues 68 to 103, 104 to 139, 151 to 186, 188 to 223, 229 to 264, and 265 to 300; these read ESKE…AQKK, YVYD…TYLD, QMMI…EEFD, MKDI…HDGD, WVKT…SDYD, and HSEA…FVGS. Ca(2+) is bound by residues D81, D83, D85, Y87, E92, D117, S119, D121, and E128. An N-linked (GlcNAc...) asparagine glycan is attached at N131. Positions 164, 166, 168, 175, 201, 203, 205, 212, 242, 244, 246, 248, 253, 278, 280, 282, 284, and 289 each coordinate Ca(2+). The Prevents secretion from ER signature appears at 312-315; it reads HDEF.

Belongs to the CREC family. As to quaternary structure, interacts with ggcx.

The protein localises to the endoplasmic reticulum membrane. It localises to the golgi apparatus. Its subcellular location is the secreted. The protein resides in the melanosome. It is found in the sarcoplasmic reticulum lumen. Its function is as follows. Involved in regulation of vitamin K-dependent carboxylation of multiple N-terminal glutamate residues. Seems to inhibit gamma-carboxylase ggcx. Binds 7 calcium ions with a low affinity. The sequence is that of Calumenin (calu) from Xenopus laevis (African clawed frog).